Reading from the N-terminus, the 308-residue chain is Transaldolase (308 aa).

The active-site Schiff-base intermediate with substrate is K125.

This sequence belongs to the transaldolase family. Type 1 subfamily. In terms of assembly, homodimer.

Its subcellular location is the cytoplasm. It catalyses the reaction D-sedoheptulose 7-phosphate + D-glyceraldehyde 3-phosphate = D-erythrose 4-phosphate + beta-D-fructose 6-phosphate. It participates in carbohydrate degradation; pentose phosphate pathway; D-glyceraldehyde 3-phosphate and beta-D-fructose 6-phosphate from D-ribose 5-phosphate and D-xylulose 5-phosphate (non-oxidative stage): step 2/3. Its function is as follows. Transaldolase is important for the balance of metabolites in the pentose-phosphate pathway. This Pseudomonas savastanoi pv. phaseolicola (strain 1448A / Race 6) (Pseudomonas syringae pv. phaseolicola (strain 1448A / Race 6)) protein is Transaldolase.